We begin with the raw amino-acid sequence, 469 residues long: Arginine biosynthesis bifunctional protein ArgJ, mitochondrial (469 aa).

Residues Thr199, Lys228, Thr239, Glu325, Asn464, and Thr469 each coordinate substrate. Residue Thr239 is the Nucleophile of the active site.

Belongs to the ArgJ family. In terms of assembly, heterodimer of an alpha and a beta chain. The alpha and beta chains are autoproteolytically processed from a single precursor protein within the mitochondrion.

It localises to the mitochondrion matrix. The enzyme catalyses N(2)-acetyl-L-ornithine + L-glutamate = N-acetyl-L-glutamate + L-ornithine. The catalysed reaction is L-glutamate + acetyl-CoA = N-acetyl-L-glutamate + CoA + H(+). The protein operates within amino-acid biosynthesis; L-arginine biosynthesis; L-ornithine and N-acetyl-L-glutamate from L-glutamate and N(2)-acetyl-L-ornithine (cyclic): step 1/1. Its pathway is amino-acid biosynthesis; L-arginine biosynthesis; N(2)-acetyl-L-ornithine from L-glutamate: step 1/4. Functionally, catalyzes two activities which are involved in the cyclic version of arginine biosynthesis: the synthesis of acetylglutamate from glutamate and acetyl-CoA, and of ornithine by transacetylation between acetylornithine and glutamate. In Neurospora crassa (strain ATCC 24698 / 74-OR23-1A / CBS 708.71 / DSM 1257 / FGSC 987), this protein is Arginine biosynthesis bifunctional protein ArgJ, mitochondrial.